The primary structure comprises 272 residues: 3-methyl-2-oxobutanoate hydroxymethyltransferase (272 aa).

Asp-51 and Asp-90 together coordinate Mg(2+). 3-methyl-2-oxobutanoate-binding positions include 51 to 52, Asp-90, and Lys-120; that span reads DS. Glu-122 contacts Mg(2+). Residue Glu-189 is the Proton acceptor of the active site.

It belongs to the PanB family. In terms of assembly, homodecamer; pentamer of dimers. It depends on Mg(2+) as a cofactor.

Its subcellular location is the cytoplasm. It carries out the reaction 3-methyl-2-oxobutanoate + (6R)-5,10-methylene-5,6,7,8-tetrahydrofolate + H2O = 2-dehydropantoate + (6S)-5,6,7,8-tetrahydrofolate. It functions in the pathway cofactor biosynthesis; (R)-pantothenate biosynthesis; (R)-pantoate from 3-methyl-2-oxobutanoate: step 1/2. In terms of biological role, catalyzes the reversible reaction in which hydroxymethyl group from 5,10-methylenetetrahydrofolate is transferred onto alpha-ketoisovalerate to form ketopantoate. This Syntrophus aciditrophicus (strain SB) protein is 3-methyl-2-oxobutanoate hydroxymethyltransferase.